A 497-amino-acid polypeptide reads, in one-letter code: Keratin, type II cytoskeletal 8 (497 aa).

The interval 2 to 108 is head; the sequence is TSYQRTVTVR…DPRIGQVRLE (107 aa). Residues 109–149 are coil 1A; the sequence is EKEQIKTLNNQFAGFIDKVRYLEQQNKLLETKWQLLQNQTT. Positions 109–421 constitute an IF rod domain; that stretch reads EKEQIKTLNN…KLLEGEESRL (313 aa). The interval 145 to 162 is linker 1; it reads QNQTTPSRSNLDSMFEAY. A coil 1B region spans residues 163–254; sequence ISNLRRQLDT…QIYDEEIREL (92 aa). Residues 255–278 form a linker 12 region; it reads QTQIQDTSVIVQMDNNRQLDLDNI. A coil 2 region spans residues 279–417; it reads IAEVRAQYED…ATYRKLLEGE (139 aa). The tract at residues 418-497 is tail; sequence ESRLASGIQA…VSERSNIVKE (80 aa).

It belongs to the intermediate filament family. Heterotetramer of two type I and two type II keratins. Keratin-8 associates with keratin-18. Expressed in skin.

It localises to the cytoplasm. The protein resides in the nucleus. The protein localises to the nucleoplasm. It is found in the nucleus matrix. In terms of biological role, together with KRT19, helps to link the contractile apparatus to dystrophin at the costameres of striated muscle. The protein is Keratin, type II cytoskeletal 8 of Protopterus aethiopicus (Marbled lungfish).